Here is a 92-residue protein sequence, read N- to C-terminus: UPF0235 protein CCA_00247 (92 aa).

It belongs to the UPF0235 family.

This chain is UPF0235 protein CCA_00247, found in Chlamydia caviae (strain ATCC VR-813 / DSM 19441 / 03DC25 / GPIC) (Chlamydophila caviae).